The following is a 139-amino-acid chain: Large ribosomal subunit protein bL17 (139 aa).

Residues E120–A139 form a disordered region.

The protein belongs to the bacterial ribosomal protein bL17 family. As to quaternary structure, part of the 50S ribosomal subunit. Contacts protein L32.

This Parvibaculum lavamentivorans (strain DS-1 / DSM 13023 / NCIMB 13966) protein is Large ribosomal subunit protein bL17.